The primary structure comprises 125 residues: uncharacterized protein (125 aa).

This is an uncharacterized protein from Homo sapiens (Human).